The chain runs to 317 residues: Long form salivary protein D7L2 (317 aa).

A signal peptide spans 1–20 (MYKLLVALHLILCTVSHVKT). Cystine bridges form between Cys-39-Cys-76, Cys-72-Cys-131, Cys-181-Cys-214, Cys-195-Cys-316, and Cys-255-Cys-266. Trp-58 and Tyr-73 together coordinate thromboxane A2. Residues Glu-182, Tyr-264, Asp-281, Asp-284, and Met-308 each contribute to the serotonin site.

It belongs to the PBP/GOBP family. In terms of tissue distribution, female salivary gland.

It localises to the secreted. Functionally, modulates blood feeding of female mosquitoes on vertebrate species by binding and sequestering different mediators involved in the host response, such as biogenic amines and eicosanoids. Binds serotonin with high affinity. Binds tryptamine, octopamine, dopamine and noradrenaline with low affinity. Binds leukotriene C4, leukotriene D4, leukotriene E4 and U-46619, a stable analog of thromboxane A2. Does not bind leukotriene B4, adrenaline, histamine and ADP. Inhibits platelet aggregation induced by low concentrations of collagen and arachidonic acid but not by ADP or adrenaline. The protein is Long form salivary protein D7L2 of Anopheles darlingi (Mosquito).